A 537-amino-acid polypeptide reads, in one-letter code: MASTRAKPTLPLLLALVTVVIPGPGDAQVSIHPREAFLPQGGSVQVNCSSSCKEDLSLGLETQWLKDELESGPNWKLFELSEIGEDSSPLCFENCGTVQSSASATITVYSFPESVELRPLPAWQQVGKDLTLRCHVDGGAPRTQLSAVLLRGEEILSRQPVGGHPKDPKEITFTVLASRGDHGANFSCRTELDLRPQGLALFSNVSEARSLRTFDLPATIPKLDTPDLLEVGTQQKLFCSLEGLFPASEARIYLELGGQMPTQESTNSSDSVSATALVEVTEEFDRTLPLRCVLELADQILETQRTLTVYNFSAPVLTLSQLEVSEGSQVTVKCEAHSGSKVVLLSGVEPRPPTPQVQFTLNASSEDHKRSFFCSAALEVAGKFLFKNQTLELHVLYGPRLDETDCLGNWTWQEGSQQTLKCQAWGNPSPKMTCRRKADGALLPIGVVKSVKQEMNGTYVCHAFSSHGNVTRNVYLTVLYHSQNNWTIIILVPVLLVIVGLVMAASYVYNRQRKIRIYKLQKAQEEAIKLKGQAPPP.

The first 27 residues, 1 to 27 (MASTRAKPTLPLLLALVTVVIPGPGDA), serve as a signal peptide directing secretion. Topologically, residues 28–485 (QVSIHPREAF…LTVLYHSQNN (458 aa)) are extracellular. 2 Ig-like C2-type domains span residues 41–102 (GGSV…QSSA) and 127–195 (GKDL…LDLR). An N-linked (GlcNAc...) asparagine glycan is attached at Asn47. 3 cysteine pairs are disulfide-bonded: Cys48–Cys91, Cys52–Cys95, and Cys134–Cys188. The Cell attachment site; atypical signature appears at 151 to 153 (RGE). The short motif at 179-181 (RGD) is the Cell attachment site element. Residues Asn185, Asn204, Asn267, Asn311, Asn362, Asn388, Asn409, Asn456, and Asn469 are each glycosylated (N-linked (GlcNAc...) asparagine). Residues 232 to 299 (GTQQKLFCSL…LRCVLELADQ (68 aa)) form the Ig-like C2-type 3 domain. A disulfide bridge connects residues Cys239 and Cys292. An Ig-like C2-type 4 domain is found at 327-381 (GSQVTVKCEAHSGSKVVLLSGVEPRPPTPQVQFTLNASSEDHKRSFFCSAALEVA). Cys334 and Cys374 are joined by a disulfide. 3 disulfide bridges follow: Cys406/Cys422, Cys422/Cys461, and Cys434/Cys461. Positions 415 to 468 (GSQQTLKCQAWGNPSPKMTCRRKADGALLPIGVVKSVKQEMNGTYVCHAFSSHG) constitute an Ig-like C2-type 5 domain. The helical transmembrane segment at 486 to 509 (WTIIILVPVLLVIVGLVMAASYVY) threads the bilayer. Residues 510 to 537 (NRQRKIRIYKLQKAQEEAIKLKGQAPPP) lie on the Cytoplasmic side of the membrane.

This sequence belongs to the immunoglobulin superfamily. ICAM family. As to quaternary structure, homodimer. Interacts with MUC1 and promotes cell aggregation in epithelial cells. Interacts with ARHGEF26/SGEF. Interacts (on T cell side) with CD81, CD247 and CD9 at immunological synapses between antigen-presenting cells and T cells. Monoubiquitinated, which is promoted by MARCH9 and leads to endocytosis. As to expression, expressed at low level on a subpopulation of lymphocytes, macrophages, and endothelial cells, but is strongly induced on these cells, and on fibroblasts and epithelial cells.

The protein localises to the membrane. ICAM proteins are ligands for the leukocyte adhesion protein LFA-1 (integrin alpha-L/beta-2). During leukocyte trans-endothelial migration, ICAM1 engagement promotes the assembly of endothelial apical cups through ARHGEF26/SGEF and RHOG activation. The protein is Intercellular adhesion molecule 1 (Icam1) of Mus musculus (Mouse).